The chain runs to 414 residues: MENKSPSKKNKPPSCGSLVTILSLDGGGVRGIIAGVILAFLEKQLQELDGEEARLADYFDVIAGTSTGGLVTAMLTVPDETGRPHFAAKDIVPFYLEHCPKIFPQPTGVLALLPKLPKLLSGPKYSGKYLRNLLSKLLGETRLHQTLTNIVIPTFDIKKLQPTIFSSYQLLVDPSLDVKVSDICIGTSAAPTFFPPHYFSNEDSQGNKTEFNLVDGAVTANNPTLVAMTAVSKQIVKNNPDMGKLKPLGFDRFLVISIGTGSTKREEKYSAKKAAKWGIISWLYDDGSTPILDITMESSRDMIHYHSSVVFKALQSEDKYLRIDDDTLEGDVSTMDLATKSNLENLQKIGEKMLTNRVMQMNIDTGVYEPVAENITNDEQLKRYAKILSDERKLRRLRSDTMIKDSSNESQEIK.

In terms of domain architecture, PNPLA spans 22 to 228 (LSLDGGGVRG…TANNPTLVAM (207 aa)). The short motif at 26-31 (GGGVRG) is the GXGXXG element. Residues 64–68 (GTSTG) carry the GXSXG motif. The Nucleophile role is filled by Ser-66. Asp-215 acts as the Proton acceptor in catalysis. A DGA/G motif is present at residues 215 to 217 (DGA). Ser-399 bears the Phosphoserine mark.

It belongs to the patatin family. Phosphorylated at Ser-399 by CPK3. Phosphorylation enhances PLP1 activity towards phosphatidylcholine. As to expression, expressed specifically in roots and root hairs.

It localises to the cytoplasm. Functionally, possesses non-specific lipolytic acyl hydrolase (LAH) activity. Catalyzes the hydrolysis of the neutral lipids monogalactosyldiacylglycerol (MGDG), digalactosyldiacylglycerol (DGDG) and phosphatidylglycerol (PG), and less efficiently the polar lipids phosphatidylcholine (PC) and phosphatidylinositol (PI), but not the storage lipid triacylglycerol (TAG). May play a role in root development. The polypeptide is Patatin-like protein 1 (PLP1) (Arabidopsis thaliana (Mouse-ear cress)).